A 329-amino-acid chain; its full sequence is 2-oxoglutarate-dependent dioxygenase mpl2 (329 aa).

The region spanning 183–288 is the Fe2OG dioxygenase domain; sequence PACPLRLLHY…RYSVVFFFDG (106 aa). 3 residues coordinate Fe cation: histidine 211, aspartate 213, and histidine 269. Arginine 279 contributes to the 2-oxoglutarate binding site.

Belongs to the iron/ascorbate-dependent oxidoreductase family. It depends on Fe(2+) as a cofactor.

It functions in the pathway mycotoxin biosynthesis. 2-oxoglutarate-dependent dioxygenase; part of the gene cluster that mediates the biosynthesis of the mycotoxin citrinin, a hepato-nephrotoxic compound to humans due to inhibition of respiration complex III. The pathway begins with the synthesis of a keto-aldehyde intermediate by the citrinin PKS (pksCT) from successive condensations of 4 malonyl-CoA units, presumably with a simple acetyl-CoA starter unit. Release of the keto-aldehyde intermediate is consistent with the presence of the C-terminal reductive release domain. Mp11 collaborates with pksCT by catalyzing the hydrolysis of ACP-bound acyl intermediates to free the ACP from stalled intermediates. Mpl2 then catalyzes the oxidation of the C-12 methyl of the ketone intermediate to an alcohol intermediate which is further oxidized by the oxidoreductase mpl7 to produce a bisaldehyde intermediate. The fourth catalytic step is catalyzed by the mpl4 aldehyde dehydrogenase. The final transformation is the reduction of C-3 by mpl6 to provide the chemically stable citrinin nucleus. In Monascus purpureus (Red mold), this protein is 2-oxoglutarate-dependent dioxygenase mpl2.